The primary structure comprises 214 residues: Small ribosomal subunit protein uS2 (214 aa).

The protein belongs to the universal ribosomal protein uS2 family.

The sequence is that of Small ribosomal subunit protein uS2 from Thermofilum pendens (strain DSM 2475 / Hrk 5).